A 393-amino-acid polypeptide reads, in one-letter code: Arginine biosynthesis bifunctional protein ArgJ (393 aa).

Positions 142, 168, 179, 265, 388, and 393 each coordinate substrate. Thr-179 acts as the Nucleophile in catalysis.

The protein belongs to the ArgJ family. Heterotetramer of two alpha and two beta chains.

The protein localises to the cytoplasm. The catalysed reaction is N(2)-acetyl-L-ornithine + L-glutamate = N-acetyl-L-glutamate + L-ornithine. The enzyme catalyses L-glutamate + acetyl-CoA = N-acetyl-L-glutamate + CoA + H(+). It functions in the pathway amino-acid biosynthesis; L-arginine biosynthesis; L-ornithine and N-acetyl-L-glutamate from L-glutamate and N(2)-acetyl-L-ornithine (cyclic): step 1/1. Its pathway is amino-acid biosynthesis; L-arginine biosynthesis; N(2)-acetyl-L-ornithine from L-glutamate: step 1/4. Its function is as follows. Catalyzes two activities which are involved in the cyclic version of arginine biosynthesis: the synthesis of N-acetylglutamate from glutamate and acetyl-CoA as the acetyl donor, and of ornithine by transacetylation between N(2)-acetylornithine and glutamate. This chain is Arginine biosynthesis bifunctional protein ArgJ, found in Desulfotalea psychrophila (strain LSv54 / DSM 12343).